A 172-amino-acid polypeptide reads, in one-letter code: Probable calcium-binding protein CML28 (172 aa).

EF-hand domains follow at residues 1-36 (MDST…FGIF), 37-72 (IPDD…ILGD), 95-130 (DEDE…LGLK), and 133-168 (RTAD…GGFA). Ca(2+)-binding residues include Asp-14, Asn-16, Asp-18, Arg-20, Glu-25, Asp-50, Asn-52, Asp-54, Cys-56, Glu-61, Asp-108, Asn-110, Asp-112, Glu-119, Asp-146, Asp-148, Asp-150, Arg-152, and Glu-157.

Potential calcium sensor. This Oryza sativa subsp. japonica (Rice) protein is Probable calcium-binding protein CML28 (CML28).